The primary structure comprises 148 residues: uncharacterized protein (148 aa).

An HTH asnC-type domain is found at 3–64; sequence LDALDRKILE…KLNYESIGYD (62 aa). Residues 22-41 constitute a DNA-binding region (H-T-H motif); sequence YREIAKDLNVAVGTIYNRIK.

This is an uncharacterized protein from Pyrococcus horikoshii (strain ATCC 700860 / DSM 12428 / JCM 9974 / NBRC 100139 / OT-3).